The primary structure comprises 719 residues: CRAL-TRIO domain-containing protein T23G5.2 (719 aa).

Positions 2-175 (VQTYRSPVRI…FIEELLKKTT (174 aa)) constitute a PRELI/MSF1 domain. A CRAL-TRIO domain is found at 319–495 (RPTVIKQYFP…FLGGSCLTTN (177 aa)). One can recognise a GOLD domain in the interval 524–681 (HSTYTSTATW…KCRLIYYYEI (158 aa)). Residues 700–719 (SSFSSIAPPTPPTPGTPRNP) are disordered. The segment covering 707–719 (PPTPPTPGTPRNP) has biased composition (pro residues).

This is CRAL-TRIO domain-containing protein T23G5.2 from Caenorhabditis elegans.